Reading from the N-terminus, the 282-residue chain is Ribonuclease 3 (282 aa).

The RNase III domain maps to 18–141 (FVAFFKSLNI…LVAAIYEDLG (124 aa)). Glutamate 59 contacts Mg(2+). Aspartate 63 is a catalytic residue. Aspartate 127 and glutamate 130 together coordinate Mg(2+). Residue glutamate 130 is part of the active site.

It belongs to the ribonuclease III family. Homodimer. The cofactor is Mg(2+).

The protein resides in the cytoplasm. It carries out the reaction Endonucleolytic cleavage to 5'-phosphomonoester.. In terms of biological role, digests double-stranded RNA. Involved in the processing of primary rRNA transcript to yield the immediate precursors to the large and small rRNAs (23S and 16S). Processes some mRNAs, and tRNAs when they are encoded in the rRNA operon. Processes pre-crRNA and tracrRNA of type II CRISPR loci if present in the organism. This chain is Ribonuclease 3, found in Mycoplasmoides pneumoniae (strain ATCC 15531 / DSM 23978 / CIP 103766 / NBRC 14401 / NCTC 10119 / FH) (Mycoplasma pneumoniae).